Reading from the N-terminus, the 279-residue chain is Zinc finger CCCH domain-containing protein 42 (279 aa).

The tract at residues 11–77 (SDHRSSSTPM…KAAVEPQEYP (67 aa)) is disordered. Low complexity predominate over residues 16 to 39 (SSTPMATTTSSSASDPAAISPTPS). C3H1-type zinc fingers lie at residues 79–107 (RPGV…HPAK), 120–148 (RPGE…HPPD), and 186–214 (RPGT…HPNS).

This is Zinc finger CCCH domain-containing protein 42 from Oryza sativa subsp. japonica (Rice).